The chain runs to 437 residues: Eukaryotic peptide chain release factor subunit 1 (437 aa).

Residues 61 to 64 (NIKS) carry the NIKS motif; plays an important role in translational termination motif.

The protein belongs to the eukaryotic release factor 1 family. In terms of assembly, component of the eRF1-eRF3-GTP ternary complex, composed of ETF1/ERF1 and eRF3 (GSPT1/ERF3A or GSPT2/ERF3B) and GTP.

It localises to the cytoplasm. Its function is as follows. Component of the eRF1-eRF3-GTP ternary complex, a ternary complex that mediates translation termination in response to the termination codons. The eRF1-eRF3-GTP complex binds to a stop codon in the ribosomal A-site. ETF1/ERF1 is responsible for stop codon recognition and inducing hydrolysis of peptidyl-tRNA. Following GTP hydrolysis, eRF3 (GSPT1/ERF3A or GSPT2/ERF3B) dissociates, permitting ETF1/eRF1 to accommodate fully in the A-site, followed by hydrolysis of peptidyl-tRNA. In Xenopus tropicalis (Western clawed frog), this protein is Eukaryotic peptide chain release factor subunit 1 (etf1).